Here is a 271-residue protein sequence, read N- to C-terminus: Phosphate import ATP-binding protein PstB (271 aa).

The ABC transporter domain occupies 25–266 (FDTKNLNLWY…PSDKRTEDYI (242 aa)). Residue 57 to 64 (GPSGCGKS) coordinates ATP.

This sequence belongs to the ABC transporter superfamily. Phosphate importer (TC 3.A.1.7) family. As to quaternary structure, the complex is composed of two ATP-binding proteins (PstB), two transmembrane proteins (PstC and PstA) and a solute-binding protein (PstS).

It is found in the cell membrane. It carries out the reaction phosphate(out) + ATP + H2O = ADP + 2 phosphate(in) + H(+). Part of the ABC transporter complex PstSACB involved in phosphate import. Responsible for energy coupling to the transport system. The chain is Phosphate import ATP-binding protein PstB from Bacillus anthracis.